The primary structure comprises 397 residues: Elongation factor Tu (397 aa).

The 198-residue stretch at 10–207 (KPHVNIGTIG…ACDSYIPEPE (198 aa)) folds into the tr-type G domain. Residues 19-26 (GHIDHGKT) form a G1 region. 19–26 (GHIDHGKT) provides a ligand contact to GTP. A Mg(2+)-binding site is contributed by Thr26. The tract at residues 60-64 (GITIA) is G2. Positions 81–84 (DCPG) are G3. GTP contacts are provided by residues 81-85 (DCPGH) and 136-139 (NKCD). The G4 stretch occupies residues 136–139 (NKCD). Residues 174 to 176 (SAL) form a G5 region.

This sequence belongs to the TRAFAC class translation factor GTPase superfamily. Classic translation factor GTPase family. EF-Tu/EF-1A subfamily. As to quaternary structure, monomer.

It is found in the cytoplasm. It carries out the reaction GTP + H2O = GDP + phosphate + H(+). Functionally, GTP hydrolase that promotes the GTP-dependent binding of aminoacyl-tRNA to the A-site of ribosomes during protein biosynthesis. In Oleidesulfovibrio alaskensis (strain ATCC BAA-1058 / DSM 17464 / G20) (Desulfovibrio alaskensis), this protein is Elongation factor Tu.